The following is a 445-amino-acid chain: Succinate--CoA ligase [ADP-forming] subunit beta, mitochondrial (445 aa).

A mitochondrion-targeting transit peptide spans 1–17 (MLSNIVKKTIQSSKNLK). One can recognise an ATP-grasp domain in the interval 43–270 (QKMMKSYGIN…DNAAFRHPDI (228 aa)). ATP is bound by residues lysine 80 and 87–89 (GRG). The Mg(2+) site is built by asparagine 240 and aspartate 254. Substrate-binding positions include asparagine 305 and 362 to 364 (GIM).

The protein belongs to the succinate/malate CoA ligase beta subunit family. ATP-specific subunit beta subfamily. In terms of assembly, heterodimer of an alpha and a beta subunit. The beta subunit determines specificity for ATP. Mg(2+) is required as a cofactor.

Its subcellular location is the mitochondrion. It carries out the reaction succinate + ATP + CoA = succinyl-CoA + ADP + phosphate. It functions in the pathway carbohydrate metabolism; tricarboxylic acid cycle; succinate from succinyl-CoA (ligase route): step 1/1. Functionally, ATP-specific succinyl-CoA synthetase functions in the citric acid cycle (TCA), coupling the hydrolysis of succinyl-CoA to the synthesis of ATP and thus represents the only step of substrate-level phosphorylation in the TCA. The beta subunit provides nucleotide specificity of the enzyme and binds the substrate succinate, while the binding sites for coenzyme A and phosphate are found in the alpha subunit. This Dictyostelium discoideum (Social amoeba) protein is Succinate--CoA ligase [ADP-forming] subunit beta, mitochondrial (scsC).